Here is a 101-residue protein sequence, read N- to C-terminus: Small ribosomal subunit protein uS14 (101 aa).

This sequence belongs to the universal ribosomal protein uS14 family. Part of the 30S ribosomal subunit. Contacts proteins S3 and S10.

Functionally, binds 16S rRNA, required for the assembly of 30S particles and may also be responsible for determining the conformation of the 16S rRNA at the A site. In Pseudomonas putida (strain GB-1), this protein is Small ribosomal subunit protein uS14.